A 172-amino-acid chain; its full sequence is MDLKQYVSEVEDWPKPGVNFKDITTIMDNGEAYGYATDQIVEYAKLRDVDIIVGPEARGFIIGCPVAYSMGIGFAPVRKEGKLPREVIRYEYDLEYGTNVLTMHKDAIKPGQRVLITDDLLATGGTIEAAIKLVEKLGGIVVGIAFIIELKYLNGIEKIKDYDVMSLISYED.

The protein belongs to the purine/pyrimidine phosphoribosyltransferase family. Homodimer.

The protein resides in the cytoplasm. The enzyme catalyses AMP + diphosphate = 5-phospho-alpha-D-ribose 1-diphosphate + adenine. It functions in the pathway purine metabolism; AMP biosynthesis via salvage pathway; AMP from adenine: step 1/1. Its function is as follows. Catalyzes a salvage reaction resulting in the formation of AMP, that is energically less costly than de novo synthesis. This Staphylococcus saprophyticus subsp. saprophyticus (strain ATCC 15305 / DSM 20229 / NCIMB 8711 / NCTC 7292 / S-41) protein is Adenine phosphoribosyltransferase.